We begin with the raw amino-acid sequence, 920 residues long: Urea transporter 2 (920 aa).

The tract at residues Phe-25–Glu-57 is disordered. The segment covering Thr-26–Pro-39 has biased composition (low complexity). Basic and acidic residues predominate over residues Pro-47–Glu-57. Helical transmembrane passes span Trp-151–Leu-170, Ala-176–Phe-196, Trp-204–Leu-224, Leu-233–His-253, Ile-272–Gly-291, Gly-302–Ile-322, Trp-346–Trp-366, Leu-370–Met-390, and Val-392–Leu-412. Residues Glu-446 to Gly-467 form a disordered region. Phosphoserine is present on Ser-477. A run of 4 helical transmembrane segments spans residues Gly-600 to Leu-620, Ala-638 to Phe-658, Trp-666 to Leu-686, and Leu-695 to His-715. Asn-733 is a glycosylation site (N-linked (GlcNAc...) asparagine). A run of 4 helical transmembrane segments spans residues Gly-764–Ile-784, Ile-803–Phe-823, Leu-832–Leu-852, and Val-854–Leu-874.

This sequence belongs to the urea transporter family. In terms of assembly, interacts with SNAPIN which enhances its urea transport activity. Epressed in the inner medulla of the kidney (at protein level). As to expression, expressed in the kidney.

It is found in the apical cell membrane. Its subcellular location is the cell membrane. The catalysed reaction is urea(in) = urea(out). With respect to regulation, inhibited by phloretin. In terms of biological role, mediates the transport of urea driven by a concentration gradient across the cell membrane of the renal inner medullary collecting duct which is critical to the urinary concentrating mechanism. Mediates the transport of urea driven by a concentration gradient across the cell membrane of the kidney inner medullary collecting duct which is critical to the urinary concentrating mechanism. In Homo sapiens (Human), this protein is Urea transporter 2 (SLC14A2).